The following is a 257-amino-acid chain: MASCFCNKVDVTEGTHGTSSSDDALVSSQDPRHPANLICTLCKMFYYNNWVTGTGGGISIKHSKTGHIYIAPSGVQKEQLKPADMFVMDPASGSYLRTPQLYKPSACTPLFMSCYKQRDAGAVIHTHSQHAVMCSLIFDKELRIANIEQIKAIPSGKKDAKTGKDINLSFFDTLVIPIIDNTAHEEDLTEGLQEALQKYPNTTAVIVRRHGIYVWGPSVDKAKVYNEAIDYLMEVAWKMHQLGIPPDCGIGEEKKYL.

A substrate-binding site is contributed by Cys107. Zn(2+)-binding residues include His125 and His127. Catalysis depends on Glu148, which acts as the Proton donor/acceptor. His210 lines the Zn(2+) pocket.

It belongs to the aldolase class II family. MtnB subfamily. It depends on Zn(2+) as a cofactor.

The protein resides in the cytoplasm. It carries out the reaction 5-(methylsulfanyl)-D-ribulose 1-phosphate = 5-methylsulfanyl-2,3-dioxopentyl phosphate + H2O. It functions in the pathway amino-acid biosynthesis; L-methionine biosynthesis via salvage pathway; L-methionine from S-methyl-5-thio-alpha-D-ribose 1-phosphate: step 2/6. Its function is as follows. Catalyzes the dehydration of methylthioribulose-1-phosphate (MTRu-1-P) into 2,3-diketo-5-methylthiopentyl-1-phosphate (DK-MTP-1-P). The sequence is that of Methylthioribulose-1-phosphate dehydratase from Lachancea thermotolerans (strain ATCC 56472 / CBS 6340 / NRRL Y-8284) (Yeast).